A 360-amino-acid chain; its full sequence is MTDLQSLESDLLAQVQGAPDEAALEGVRVAALGKKGAVSELLKTLGAMSPEERKERGPLINGLRDRVHGAILARRETLAEAALEARLAAERIDVTLPVREGPETRGRVHPITQVIDEITAIFGDMGFSIAEGPDIETDELNFTALNFPEGHPAREMHDTFFLPPGRDGTRKLLRTHTSPVQVRTMRAQEPPIRVICPGRTYRHDSDQTHTPMFHQVEGLVIDRSANLAHLKWILEEFCKAFFEVESVKMRFRPSFFPFTEPSAEVDIQCSRQGGEIRFGEGNDWLEILGCGMVHPNVLRHCGLDPDQVQGFAWGLGIDRIAMLKYGMPDLRPFFEADMRWLDHYGFRPLDIPSLVGGLTG.

Glu260 provides a ligand contact to Mg(2+).

Belongs to the class-II aminoacyl-tRNA synthetase family. Phe-tRNA synthetase alpha subunit type 1 subfamily. In terms of assembly, tetramer of two alpha and two beta subunits. Requires Mg(2+) as cofactor.

The protein localises to the cytoplasm. It catalyses the reaction tRNA(Phe) + L-phenylalanine + ATP = L-phenylalanyl-tRNA(Phe) + AMP + diphosphate + H(+). This is Phenylalanine--tRNA ligase alpha subunit from Methylobacterium nodulans (strain LMG 21967 / CNCM I-2342 / ORS 2060).